We begin with the raw amino-acid sequence, 318 residues long: Tyrosine recombinase XerC (318 aa).

Residues 17 to 108 (PEVMAERRRW…GLRSFLRYLE (92 aa)) form the Core-binding (CB) domain. In terms of domain architecture, Tyr recombinase spans 129 to 312 (SLPKALTDRE…DSARLLEIYD (184 aa)). Active-site residues include arginine 172, lysine 196, histidine 264, arginine 267, and histidine 290. Residue tyrosine 299 is the O-(3'-phospho-DNA)-tyrosine intermediate of the active site.

This sequence belongs to the 'phage' integrase family. XerC subfamily. Forms a cyclic heterotetrameric complex composed of two molecules of XerC and two molecules of XerD.

Its subcellular location is the cytoplasm. In terms of biological role, site-specific tyrosine recombinase, which acts by catalyzing the cutting and rejoining of the recombining DNA molecules. The XerC-XerD complex is essential to convert dimers of the bacterial chromosome into monomers to permit their segregation at cell division. It also contributes to the segregational stability of plasmids. The polypeptide is Tyrosine recombinase XerC (Rhizobium meliloti (strain 1021) (Ensifer meliloti)).